Reading from the N-terminus, the 680-residue chain is Methionine--tRNA ligase (680 aa).

Positions 15-25 match the 'HIGH' region motif; sequence PYANGPVHIGH. Residues cysteine 147, cysteine 150, cysteine 160, and cysteine 163 each contribute to the Zn(2+) site. A 'KMSKS' region motif is present at residues 332–336; the sequence is KISTS. Threonine 335 lines the ATP pocket. One can recognise a tRNA-binding domain in the interval 579–680; it reads DFLKLDIRVG…AEVAAGSQVK (102 aa).

It belongs to the class-I aminoacyl-tRNA synthetase family. MetG type 1 subfamily. As to quaternary structure, homodimer. Zn(2+) is required as a cofactor.

It localises to the cytoplasm. It carries out the reaction tRNA(Met) + L-methionine + ATP = L-methionyl-tRNA(Met) + AMP + diphosphate. In terms of biological role, is required not only for elongation of protein synthesis but also for the initiation of all mRNA translation through initiator tRNA(fMet) aminoacylation. This is Methionine--tRNA ligase from Porphyromonas gingivalis (strain ATCC BAA-308 / W83).